The following is a 312-amino-acid chain: Phosphoribosylaminoimidazole-succinocarboxamide synthase (312 aa).

The protein belongs to the SAICAR synthetase family.

It carries out the reaction 5-amino-1-(5-phospho-D-ribosyl)imidazole-4-carboxylate + L-aspartate + ATP = (2S)-2-[5-amino-1-(5-phospho-beta-D-ribosyl)imidazole-4-carboxamido]succinate + ADP + phosphate + 2 H(+). Its pathway is purine metabolism; IMP biosynthesis via de novo pathway; 5-amino-1-(5-phospho-D-ribosyl)imidazole-4-carboxamide from 5-amino-1-(5-phospho-D-ribosyl)imidazole-4-carboxylate: step 1/2. The protein is Phosphoribosylaminoimidazole-succinocarboxamide synthase of Legionella pneumophila (strain Paris).